The sequence spans 262 residues: Aconitate isomerase (262 aa).

An N-terminal signal peptide occupies residues 1 to 22 (MFPRLPTLALGALLLASTPLLA).

In terms of assembly, monomer.

The catalysed reaction is trans-aconitate = cis-aconitate. With respect to regulation, activated more than 1.5 fold by Ca(2+), Mg(2+), Mn(2+), Ni(2+), Fe(2+), DDT and 1,10-phenanthroline. Strongly inhibited by Ag(+) and Hg(+). Inhibited by addition of 20% (v/v) glycerol. No effect by addition of NADH or NADPH. Its function is as follows. Involved in assimilation of trans-aconitic acid. Preference for cis-aconitic acid is 14-fold higher than for trans-aconitic acid. Not active on intermediates of tricarboxylic acid (TCA) cycle including citric acid, succinic acid, fumaric acid, and 2-oxoglutaric acid or on other dicarboxilic acids including itaconic acid, formic acid, citraconic acid or maleic acid. This Pseudomonas sp protein is Aconitate isomerase.